The primary structure comprises 128 residues: Large ribosomal subunit protein uL22 (128 aa).

This sequence belongs to the universal ribosomal protein uL22 family. In terms of assembly, part of the 50S ribosomal subunit.

In terms of biological role, this protein binds specifically to 23S rRNA; its binding is stimulated by other ribosomal proteins, e.g. L4, L17, and L20. It is important during the early stages of 50S assembly. It makes multiple contacts with different domains of the 23S rRNA in the assembled 50S subunit and ribosome. The globular domain of the protein is located near the polypeptide exit tunnel on the outside of the subunit, while an extended beta-hairpin is found that lines the wall of the exit tunnel in the center of the 70S ribosome. In Methylobacterium radiotolerans (strain ATCC 27329 / DSM 1819 / JCM 2831 / NBRC 15690 / NCIMB 10815 / 0-1), this protein is Large ribosomal subunit protein uL22.